The following is a 194-amino-acid chain: Outer surface 22 kDa lipoprotein (194 aa).

The first 21 residues, Met1–Ala21, serve as a signal peptide directing secretion. Cys22 carries N-palmitoyl cysteine lipidation. A lipid anchor (S-diacylglycerol cysteine) is attached at Cys22.

The protein localises to the cell outer membrane. This Borreliella burgdorferi (strain N40) (Borrelia burgdorferi) protein is Outer surface 22 kDa lipoprotein (p22).